The following is a 302-amino-acid chain: tRNA dimethylallyltransferase (302 aa).

G9–T16 is a binding site for ATP. Position 11 to 16 (T11 to T16) interacts with substrate.

The protein belongs to the IPP transferase family. Monomer. Mg(2+) is required as a cofactor.

It catalyses the reaction adenosine(37) in tRNA + dimethylallyl diphosphate = N(6)-dimethylallyladenosine(37) in tRNA + diphosphate. Functionally, catalyzes the transfer of a dimethylallyl group onto the adenine at position 37 in tRNAs that read codons beginning with uridine, leading to the formation of N6-(dimethylallyl)adenosine (i(6)A). This is tRNA dimethylallyltransferase from Thermus thermophilus (strain ATCC BAA-163 / DSM 7039 / HB27).